The primary structure comprises 312 residues: D-alanine--D-alanine ligase (312 aa).

The ATP-grasp domain maps to 102 to 307 (KKIFKMEGIP…FPELTDRLIK (206 aa)). Residue 136 to 191 (IKEVGVPAVVKANTQGSTIGITFVHVKEKMAEAIESALKYDQDVLVEQFVAGTEVT) coordinates ATP. Mg(2+) is bound by residues D262, E274, and N276.

The protein belongs to the D-alanine--D-alanine ligase family. Requires Mg(2+) as cofactor. It depends on Mn(2+) as a cofactor.

The protein resides in the cytoplasm. It carries out the reaction 2 D-alanine + ATP = D-alanyl-D-alanine + ADP + phosphate + H(+). It functions in the pathway cell wall biogenesis; peptidoglycan biosynthesis. Functionally, cell wall formation. The protein is D-alanine--D-alanine ligase of Desulforamulus reducens (strain ATCC BAA-1160 / DSM 100696 / MI-1) (Desulfotomaculum reducens).